The following is a 3912-amino-acid chain: Chondramide synthase cmdD (3912 aa).

The Carrier 1 domain occupies 1411-1485; it reads APRNAREETL…ALAEVASASK (75 aa). Residue serine 1446 is modified to O-(pantetheine 4'-phosphoryl)serine. Residues 1995–2029 show a composition bias toward acidic residues; sequence ADEDDEEDDELDEEFDAEVDEEDEDEEEEEDDDGE. Residues 1995–2030 are disordered; it reads ADEDDEEDDELDEEFDAEVDEEDEDEEEEEDDDGEN. The Carrier 2 domain maps to 2989-3064; it reads APRTATEETL…VLARVIDEAL (76 aa). Position 3024 is an O-(pantetheine 4'-phosphoryl)serine (serine 3024).

The protein belongs to the ATP-dependent AMP-binding enzyme family. It depends on pantetheine 4'-phosphate as a cofactor.

Involved in the synthesis of chondramides. Activates R-beta-tyrosine and probably phenylalanine. In Chondromyces crocatus, this protein is Chondramide synthase cmdD.